The sequence spans 428 residues: Enolase (428 aa).

Glutamine 162 is a (2R)-2-phosphoglycerate binding site. Catalysis depends on glutamate 204, which acts as the Proton donor. The Mg(2+) site is built by aspartate 241, glutamate 283, and aspartate 310. The (2R)-2-phosphoglycerate site is built by lysine 335, arginine 364, serine 365, and lysine 386. The active-site Proton acceptor is the lysine 335.

It belongs to the enolase family. Mg(2+) is required as a cofactor.

The protein localises to the cytoplasm. It is found in the secreted. It localises to the cell surface. It carries out the reaction (2R)-2-phosphoglycerate = phosphoenolpyruvate + H2O. The protein operates within carbohydrate degradation; glycolysis; pyruvate from D-glyceraldehyde 3-phosphate: step 4/5. In terms of biological role, catalyzes the reversible conversion of 2-phosphoglycerate (2-PG) into phosphoenolpyruvate (PEP). It is essential for the degradation of carbohydrates via glycolysis. This chain is Enolase, found in Rhodococcus erythropolis (strain PR4 / NBRC 100887).